The following is a 199-amino-acid chain: ATP-dependent Clp protease proteolytic subunit (199 aa).

Catalysis depends on S99, which acts as the Nucleophile. Residue H124 is part of the active site.

This sequence belongs to the peptidase S14 family. As to quaternary structure, fourteen ClpP subunits assemble into 2 heptameric rings which stack back to back to give a disk-like structure with a central cavity, resembling the structure of eukaryotic proteasomes.

The protein localises to the cytoplasm. It carries out the reaction Hydrolysis of proteins to small peptides in the presence of ATP and magnesium. alpha-casein is the usual test substrate. In the absence of ATP, only oligopeptides shorter than five residues are hydrolyzed (such as succinyl-Leu-Tyr-|-NHMec, and Leu-Tyr-Leu-|-Tyr-Trp, in which cleavage of the -Tyr-|-Leu- and -Tyr-|-Trp bonds also occurs).. Cleaves peptides in various proteins in a process that requires ATP hydrolysis. Has a chymotrypsin-like activity. Plays a major role in the degradation of misfolded proteins. This Lactococcus lactis subsp. lactis (strain IL1403) (Streptococcus lactis) protein is ATP-dependent Clp protease proteolytic subunit.